Consider the following 232-residue polypeptide: Phosphatidylserine decarboxylase proenzyme (232 aa).

S201 serves as the catalytic Schiff-base intermediate with substrate; via pyruvic acid. A Pyruvic acid (Ser); by autocatalysis modification is found at S201.

It belongs to the phosphatidylserine decarboxylase family. PSD-A subfamily. In terms of assembly, heterodimer of a large membrane-associated beta subunit and a small pyruvoyl-containing alpha subunit. Pyruvate serves as cofactor. In terms of processing, is synthesized initially as an inactive proenzyme. Formation of the active enzyme involves a self-maturation process in which the active site pyruvoyl group is generated from an internal serine residue via an autocatalytic post-translational modification. Two non-identical subunits are generated from the proenzyme in this reaction, and the pyruvate is formed at the N-terminus of the alpha chain, which is derived from the carboxyl end of the proenzyme. The post-translation cleavage follows an unusual pathway, termed non-hydrolytic serinolysis, in which the side chain hydroxyl group of the serine supplies its oxygen atom to form the C-terminus of the beta chain, while the remainder of the serine residue undergoes an oxidative deamination to produce ammonia and the pyruvoyl prosthetic group on the alpha chain.

The protein localises to the cell membrane. The enzyme catalyses a 1,2-diacyl-sn-glycero-3-phospho-L-serine + H(+) = a 1,2-diacyl-sn-glycero-3-phosphoethanolamine + CO2. It participates in phospholipid metabolism; phosphatidylethanolamine biosynthesis; phosphatidylethanolamine from CDP-diacylglycerol: step 2/2. Catalyzes the formation of phosphatidylethanolamine (PtdEtn) from phosphatidylserine (PtdSer). In Mycolicibacterium gilvum (strain PYR-GCK) (Mycobacterium gilvum (strain PYR-GCK)), this protein is Phosphatidylserine decarboxylase proenzyme.